Here is a 175-residue protein sequence, read N- to C-terminus: E1B protein, small T-antigen (175 aa).

A disordered region spans residues 153-175; the sequence is LAEEDEDEEGTTLTTEAEQESSA.

This sequence belongs to the adenoviridae E1B 19 kDa protein family.

This is E1B protein, small T-antigen from Mus musculus (Mouse).